Here is a 110-residue protein sequence, read N- to C-terminus: Dermcidin (110 aa).

Positions 1 to 19 (MRFMTLLFLTALAGALVCA) are cleaved as a signal peptide. The disordered stretch occupies residues 24–70 (AASAPGSGNPCHEASAAQKENAGEDPGLARQAPKPRKQRSSLLEKGL). O-linked (Xyl...) (chondroitin sulfate) serine glycans are attached at residues serine 30 and serine 38. Positions 50 to 62 (GLARQAPKPRKQR) are excised as a propeptide. A helical membrane pass occupies residues 64–108 (SLLEKGLDGAKKAVGGLGKLGKDAVEDLESVGKGAVHDVKDVLDS). A Zn(2+)-binding site is contributed by glutamate 67. Residue lysine 68 is modified to N6-acetyllysine. Zn(2+) is bound by residues aspartate 71, aspartate 86, aspartate 90, histidine 100, and aspartate 104. Leucine 110 is a propeptide.

Homohexamer. Requires Mn(2+) as cofactor. The cofactor is Zn(2+). Detected in urine (at protein level). Constitutively expressed in eccrine sweat gland cells (at protein level). Secreted into the sweat at a concentration of 1-10 micrograms/ml.

It is found in the secreted. The protein resides in the membrane. Its function is as follows. Found in sweat, has an antimicrobial activity during early bacterial colonization. The secreted peptide assembles into homohexameric complexes that can associate with and also insert into pathogen membranes. Once inserted in bacteria membranes forms anion channels probably altering the transmembrane potential essential for bacterial survival. Highly effective against E.coli, E.faecalis, S.aureus and C.albicans. Optimal pH and salt concentration resemble the conditions in sweat. Also exhibits proteolytic activity, cleaving on the C-terminal side of Arg and, to a lesser extent, Lys residues. Functionally, promotes survival of neurons and displays phosphatase activity. It may bind IgG. This is Dermcidin from Homo sapiens (Human).